Here is a 156-residue protein sequence, read N- to C-terminus: Small ribosomal subunit protein uS7 (156 aa).

The protein belongs to the universal ribosomal protein uS7 family. Part of the 30S ribosomal subunit. Contacts proteins S9 and S11.

Its function is as follows. One of the primary rRNA binding proteins, it binds directly to 16S rRNA where it nucleates assembly of the head domain of the 30S subunit. Is located at the subunit interface close to the decoding center, probably blocks exit of the E-site tRNA. This Rhizorhabdus wittichii (strain DSM 6014 / CCUG 31198 / JCM 15750 / NBRC 105917 / EY 4224 / RW1) (Sphingomonas wittichii) protein is Small ribosomal subunit protein uS7.